Consider the following 67-residue polypeptide: Small ribosomal subunit protein eS17 (67 aa).

This sequence belongs to the eukaryotic ribosomal protein eS17 family.

This chain is Small ribosomal subunit protein eS17, found in Thermococcus onnurineus (strain NA1).